The chain runs to 217 residues: Ras-related protein RABA5b (217 aa).

Residue 19–26 (GDSAVGKS) coordinates GTP. Residues 41–49 (SKATIGVEF) carry the Effector region motif. Residues 67–71 (DTAGQ), 125–128 (NKCD), and 155–156 (SA) each bind GTP. S-geranylgeranyl cysteine attachment occurs at residues C214 and C215.

The protein belongs to the small GTPase superfamily. Rab family.

The protein localises to the cell membrane. Its function is as follows. Intracellular vesicle trafficking and protein transport. This chain is Ras-related protein RABA5b (RABA5B), found in Arabidopsis thaliana (Mouse-ear cress).